We begin with the raw amino-acid sequence, 330 residues long: Ketol-acid reductoisomerase (NADP(+)) (330 aa).

The region spanning 3 to 184 (LPVYYDKDID…GGGRMGVLET (182 aa)) is the KARI N-terminal Rossmann domain. Residues 26 to 29 (YGAQ), serine 52, and serine 54 each bind NADP(+). Histidine 109 is an active-site residue. Position 135 (glycine 135) interacts with NADP(+). Residues 185–329 (SFKEECESDL…EILRAPFNHK (145 aa)) enclose the KARI C-terminal knotted domain. Positions 193, 197, 229, and 233 each coordinate Mg(2+). Serine 254 is a substrate binding site.

Belongs to the ketol-acid reductoisomerase family. The cofactor is Mg(2+).

It catalyses the reaction (2R)-2,3-dihydroxy-3-methylbutanoate + NADP(+) = (2S)-2-acetolactate + NADPH + H(+). The enzyme catalyses (2R,3R)-2,3-dihydroxy-3-methylpentanoate + NADP(+) = (S)-2-ethyl-2-hydroxy-3-oxobutanoate + NADPH + H(+). Its pathway is amino-acid biosynthesis; L-isoleucine biosynthesis; L-isoleucine from 2-oxobutanoate: step 2/4. The protein operates within amino-acid biosynthesis; L-valine biosynthesis; L-valine from pyruvate: step 2/4. Its function is as follows. Involved in the biosynthesis of branched-chain amino acids (BCAA). Catalyzes an alkyl-migration followed by a ketol-acid reduction of (S)-2-acetolactate (S2AL) to yield (R)-2,3-dihydroxy-isovalerate. In the isomerase reaction, S2AL is rearranged via a Mg-dependent methyl migration to produce 3-hydroxy-3-methyl-2-ketobutyrate (HMKB). In the reductase reaction, this 2-ketoacid undergoes a metal-dependent reduction by NADPH to yield (R)-2,3-dihydroxy-isovalerate. The protein is Ketol-acid reductoisomerase (NADP(+)) of Helicobacter pylori (strain ATCC 700392 / 26695) (Campylobacter pylori).